The primary structure comprises 136 residues: MFIIIFIVLISLIGCETLQHDGKVFPMKGPLTRVVIYNDNDYLLGVHCKSRDDDHGFHILQKGGLYGWMFYVNFMNSTLYFCGFSQEQVKKGVFDIYKAVRDSSRCRNCTWEAKEDGIYGYGEIPKKNPLFYKWLM.

The first 17 residues, 1-17 (MFIIIFIVLISLIGCET), serve as a signal peptide directing secretion. Asn-76 and Asn-108 each carry an N-linked (GlcNAc...) asparagine glycan.

The protein belongs to the plant self-incompatibility (S1) protein family.

It localises to the secreted. In Arabidopsis thaliana (Mouse-ear cress), this protein is S-protein homolog 6.